The chain runs to 252 residues: Carbonic anhydrase (252 aa).

The N-terminal stretch at 1 to 26 is a signal peptide; it reads MPRFPRTLPRLTAVLLLACTAFSAAA. Residues 31–252 form the Alpha-carbonic anhydrase domain; that stretch reads THWGYTGHDS…QPLNARVVIE (222 aa). Cys-54 and Cys-207 are oxidised to a cystine. The active-site Proton acceptor is His-92. Positions 118, 120, and 137 each coordinate Zn(2+). 203 to 204 is a binding site for substrate; sequence TT.

It belongs to the alpha-carbonic anhydrase family. In terms of assembly, homodimer. Zn(2+) serves as cofactor.

It is found in the periplasm. It carries out the reaction hydrogencarbonate + H(+) = CO2 + H2O. Functionally, reversible hydration of carbon dioxide. The sequence is that of Carbonic anhydrase (cah) from Neisseria gonorrhoeae.